A 491-amino-acid polypeptide reads, in one-letter code: UDP-N-acetylmuramoyl-L-alanyl-D-glutamate--2,6-diaminopimelate ligase (491 aa).

S30 is a binding site for UDP-N-acetyl-alpha-D-muramoyl-L-alanyl-D-glutamate. Residue 108–114 (GTNGKTT) coordinates ATP. Residues N149, 150–151 (TT), S177, and R185 each bind UDP-N-acetyl-alpha-D-muramoyl-L-alanyl-D-glutamate. K217 is modified (N6-carboxylysine). Residues R383, 407 to 410 (DNPR), G457, and E461 contribute to the meso-2,6-diaminopimelate site. Positions 407–410 (DNPR) match the Meso-diaminopimelate recognition motif motif.

The protein belongs to the MurCDEF family. MurE subfamily. Mg(2+) serves as cofactor. Carboxylation is probably crucial for Mg(2+) binding and, consequently, for the gamma-phosphate positioning of ATP.

The protein resides in the cytoplasm. The catalysed reaction is UDP-N-acetyl-alpha-D-muramoyl-L-alanyl-D-glutamate + meso-2,6-diaminopimelate + ATP = UDP-N-acetyl-alpha-D-muramoyl-L-alanyl-gamma-D-glutamyl-meso-2,6-diaminopimelate + ADP + phosphate + H(+). The protein operates within cell wall biogenesis; peptidoglycan biosynthesis. Functionally, catalyzes the addition of meso-diaminopimelic acid to the nucleotide precursor UDP-N-acetylmuramoyl-L-alanyl-D-glutamate (UMAG) in the biosynthesis of bacterial cell-wall peptidoglycan. The chain is UDP-N-acetylmuramoyl-L-alanyl-D-glutamate--2,6-diaminopimelate ligase from Bacillus cereus (strain ATCC 14579 / DSM 31 / CCUG 7414 / JCM 2152 / NBRC 15305 / NCIMB 9373 / NCTC 2599 / NRRL B-3711).